The primary structure comprises 206 residues: Dephospho-CoA kinase (206 aa).

The 197-residue stretch at 4–200 (IVALTGGIGS…AHYLQLASQF (197 aa)) folds into the DPCK domain. An ATP-binding site is contributed by 12-17 (GSGKST).

Belongs to the CoaE family.

It is found in the cytoplasm. The enzyme catalyses 3'-dephospho-CoA + ATP = ADP + CoA + H(+). The protein operates within cofactor biosynthesis; coenzyme A biosynthesis; CoA from (R)-pantothenate: step 5/5. Its function is as follows. Catalyzes the phosphorylation of the 3'-hydroxyl group of dephosphocoenzyme A to form coenzyme A. This Shigella flexneri protein is Dephospho-CoA kinase.